The primary structure comprises 454 residues: Capsid protein (454 aa).

It belongs to the icosahedral plant coat protein family. As to quaternary structure, homomultimer.

The protein localises to the virion. In terms of biological role, capsid protein self-assembles to form an icosahedral capsid with a T=3 symmetry, about 28-34 nm in diameter, and consisting of 180 capsid proteins. This chain is Capsid protein, found in Oat chlorotic stunt virus (isolate United Kingdom) (OCSV).